Reading from the N-terminus, the 427-residue chain is Dihydroorotase (427 aa).

Zn(2+)-binding residues include histidine 60 and histidine 62. Residues 62-64 and asparagine 94 each bind substrate; that span reads HFR. Residues aspartate 152, histidine 179, and histidine 232 each contribute to the Zn(2+) site. Position 278 (asparagine 278) interacts with substrate. Aspartate 305 is a binding site for Zn(2+). Aspartate 305 is an active-site residue. Substrate-binding positions include histidine 309 and 323 to 324; that span reads FG.

Belongs to the metallo-dependent hydrolases superfamily. DHOase family. Class I DHOase subfamily. Zn(2+) is required as a cofactor.

It catalyses the reaction (S)-dihydroorotate + H2O = N-carbamoyl-L-aspartate + H(+). It participates in pyrimidine metabolism; UMP biosynthesis via de novo pathway; (S)-dihydroorotate from bicarbonate: step 3/3. Functionally, catalyzes the reversible cyclization of carbamoyl aspartate to dihydroorotate. The sequence is that of Dihydroorotase from Enterococcus faecalis (strain ATCC 700802 / V583).